A 961-amino-acid polypeptide reads, in one-letter code: Probable inorganic carbon transporter subunit DabA (961 aa).

Residues C406, D408, H653, and C668 each contribute to the Zn(2+) site.

It belongs to the inorganic carbon transporter (TC 9.A.2) DabA family. Forms a complex with DabB. It depends on Zn(2+) as a cofactor.

It is found in the cell inner membrane. Part of an energy-coupled inorganic carbon pump. The protein is Probable inorganic carbon transporter subunit DabA of Hydrogenobaculum sp. (strain Y04AAS1).